Reading from the N-terminus, the 209-residue chain is Uracil phosphoribosyltransferase (209 aa).

Residues Arg79, Arg104, and 131 to 139 (DPMLATGGS) contribute to the 5-phospho-alpha-D-ribose 1-diphosphate site. Uracil-binding positions include Ile194 and 199–201 (GDA). Residue Asp200 participates in 5-phospho-alpha-D-ribose 1-diphosphate binding.

Belongs to the UPRTase family. Requires Mg(2+) as cofactor.

The catalysed reaction is UMP + diphosphate = 5-phospho-alpha-D-ribose 1-diphosphate + uracil. It functions in the pathway pyrimidine metabolism; UMP biosynthesis via salvage pathway; UMP from uracil: step 1/1. Allosterically activated by GTP. Functionally, catalyzes the conversion of uracil and 5-phospho-alpha-D-ribose 1-diphosphate (PRPP) to UMP and diphosphate. This Geobacter sulfurreducens (strain ATCC 51573 / DSM 12127 / PCA) protein is Uracil phosphoribosyltransferase.